Here is a 294-residue protein sequence, read N- to C-terminus: Decaprenyl-diphosphate synthase subunit 2 (294 aa).

It belongs to the FPP/GGPP synthase family. In terms of assembly, heterotetramer of 2 dps1 and 2 dlp1 subunits.

It localises to the mitochondrion. The catalysed reaction is 7 isopentenyl diphosphate + (2E,6E)-farnesyl diphosphate = all-trans-decaprenyl diphosphate + 7 diphosphate. It functions in the pathway cofactor biosynthesis; ubiquinone biosynthesis. Functionally, supplies decaprenyl diphosphate, the precursor for the side chain of the isoprenoid quinones ubiquinone-10. This Schizosaccharomyces pombe (strain 972 / ATCC 24843) (Fission yeast) protein is Decaprenyl-diphosphate synthase subunit 2 (dlp1).